Reading from the N-terminus, the 934-residue chain is Protein translocase subunit SecA (934 aa).

ATP-binding positions include glutamine 87, 105-109 (GEGKT), and aspartate 515. The Zn(2+) site is built by cysteine 918, cysteine 920, cysteine 929, and histidine 930.

Belongs to the SecA family. Monomer and homodimer. Part of the essential Sec protein translocation apparatus which comprises SecA, SecYEG and auxiliary proteins SecDF-YajC and YidC. The cofactor is Zn(2+).

Its subcellular location is the cell inner membrane. It localises to the cytoplasm. The catalysed reaction is ATP + H2O + cellular proteinSide 1 = ADP + phosphate + cellular proteinSide 2.. In terms of biological role, part of the Sec protein translocase complex. Interacts with the SecYEG preprotein conducting channel. Has a central role in coupling the hydrolysis of ATP to the transfer of proteins into and across the cell membrane, serving both as a receptor for the preprotein-SecB complex and as an ATP-driven molecular motor driving the stepwise translocation of polypeptide chains across the membrane. The polypeptide is Protein translocase subunit SecA (Ralstonia pickettii (strain 12J)).